Here is a 90-residue protein sequence, read N- to C-terminus: Large ribosomal subunit protein bL27 (90 aa).

A disordered region spans residues 1 to 22 (MAHKKAGGSTRNGRDSNPKMLG).

The protein belongs to the bacterial ribosomal protein bL27 family.

This chain is Large ribosomal subunit protein bL27, found in Coxiella burnetii (strain CbuK_Q154) (Coxiella burnetii (strain Q154)).